A 329-amino-acid polypeptide reads, in one-letter code: Beta-ketoacyl-[acyl-carrier-protein] synthase III (329 aa).

Residues Cys-123 and His-256 contribute to the active site. Positions 257–261 are ACP-binding; the sequence is QANIR. Asn-286 is an active-site residue.

It belongs to the thiolase-like superfamily. FabH family. Homodimer.

It localises to the cytoplasm. The enzyme catalyses malonyl-[ACP] + acetyl-CoA + H(+) = 3-oxobutanoyl-[ACP] + CO2 + CoA. Its pathway is lipid metabolism; fatty acid biosynthesis. Catalyzes the condensation reaction of fatty acid synthesis by the addition to an acyl acceptor of two carbons from malonyl-ACP. Catalyzes the first condensation reaction which initiates fatty acid synthesis and may therefore play a role in governing the total rate of fatty acid production. Possesses both acetoacetyl-ACP synthase and acetyl transacylase activities. Its substrate specificity determines the biosynthesis of branched-chain and/or straight-chain of fatty acids. The protein is Beta-ketoacyl-[acyl-carrier-protein] synthase III of Burkholderia thailandensis (strain ATCC 700388 / DSM 13276 / CCUG 48851 / CIP 106301 / E264).